A 495-amino-acid chain; its full sequence is Polybrominated aromatic compounds synthase (495 aa).

Cys-437 is a binding site for heme.

It belongs to the cytochrome P450 family. Heme is required as a cofactor.

Functionally, cytochrome P450 protein involved in the biosynthesis of polybrominated aromatic organic compounds. In the presence of ferredoxin, ferredoxin reductase and NADH, catalyzes the coupling of bromophenols and bromopyrroles, forming various polybrominated biphenyls and hydroxylated polybrominated diphenyl ethers (OH-BDE). Can also mediate the heterocoupling of 3,5-dibromocatechol, forming six different compounds, including polybrominated dibenzo-p-dioxins, which are among the most toxic molecules known to man. The polypeptide is Polybrominated aromatic compounds synthase (Marinomonas mediterranea (strain ATCC 700492 / JCM 21426 / NBRC 103028 / MMB-1)).